The chain runs to 383 residues: Putative glutamate--cysteine ligase 2-1 (383 aa).

It belongs to the glutamate--cysteine ligase type 2 family. YbdK subfamily.

It carries out the reaction L-cysteine + L-glutamate + ATP = gamma-L-glutamyl-L-cysteine + ADP + phosphate + H(+). In terms of biological role, ATP-dependent carboxylate-amine ligase which exhibits weak glutamate--cysteine ligase activity. In Legionella pneumophila (strain Corby), this protein is Putative glutamate--cysteine ligase 2-1.